The following is a 528-amino-acid chain: UDP-glucuronosyltransferase 2B19 (528 aa).

An N-terminal signal peptide occupies residues 1-21; sequence MSMKWTSALLLIQLSCYLSFG. Lys-135 bears the N6-succinyllysine mark. An N-linked (GlcNAc...) asparagine glycan is attached at Asn-315. Residues 493 to 513 traverse the membrane as a helical segment; sequence VIGFLLACVATVIFIITKCLF.

It belongs to the UDP-glycosyltransferase family. As to expression, expressed in liver, ovary, prostate, colon, kidney, pancreas, brain, cerebellum, mammary gland and epididymis. Not expressed in small intestine, spleen, bladder, adrenal gland and testis.

It localises to the microsome membrane. The protein resides in the endoplasmic reticulum membrane. The catalysed reaction is glucuronate acceptor + UDP-alpha-D-glucuronate = acceptor beta-D-glucuronoside + UDP + H(+). Functionally, UDPGT is of major importance in the conjugation and subsequent elimination of potentially toxic xenobiotics and endogenous compounds. This isozyme displays activity toward several classes of xenobiotic substrates: eugenol, 4-methyllumbelliferone, p-nitrophenol, 1-naphthol, p,p'-biphenol, naringenin and o,o'-biphenol. Active also on 3a-hydroxy and 17b-hydroxy positions of steroids. Contributes to the formation of androgen glucuronide in extrahepatic steroid target tissues such as the prostate. This is UDP-glucuronosyltransferase 2B19 (UGT2B19) from Macaca fascicularis (Crab-eating macaque).